We begin with the raw amino-acid sequence, 353 residues long: tRNA N6-adenosine threonylcarbamoyltransferase (353 aa).

Positions 115 and 119 each coordinate Fe cation. Substrate contacts are provided by residues 138 to 142 (LVSGG), D171, G184, and N276. Residue D304 coordinates Fe cation.

Belongs to the KAE1 / TsaD family. It depends on Fe(2+) as a cofactor.

The protein resides in the cytoplasm. It carries out the reaction L-threonylcarbamoyladenylate + adenosine(37) in tRNA = N(6)-L-threonylcarbamoyladenosine(37) in tRNA + AMP + H(+). Functionally, required for the formation of a threonylcarbamoyl group on adenosine at position 37 (t(6)A37) in tRNAs that read codons beginning with adenine. Is involved in the transfer of the threonylcarbamoyl moiety of threonylcarbamoyl-AMP (TC-AMP) to the N6 group of A37, together with TsaE and TsaB. TsaD likely plays a direct catalytic role in this reaction. The sequence is that of tRNA N6-adenosine threonylcarbamoyltransferase from Xanthomonas euvesicatoria pv. vesicatoria (strain 85-10) (Xanthomonas campestris pv. vesicatoria).